The sequence spans 732 residues: Eukaryotic translation initiation factor 3 subunit B (732 aa).

The sufficient for interaction with HCR1 and TIF32 stretch occupies residues 1 to 94; the sequence is MTTLESLKIE…LFIEMESVSA (94 aa). The tract at residues 1-219 is sufficient for interaction with PIC8; it reads MTTLESLKIE…GVTSWGGPNF (219 aa). Residues 37 to 120 enclose the RRM domain; that stretch reads NFLVVDGAPV…HRLLVNSLND (84 aa). WD repeat units lie at residues 185–224, 237–280, 439–481, and 507–554; these read ARKN…RLKR, PTEK…LMKT, EMKD…KFFA, and VDQQ…KTLN.

It belongs to the eIF-3 subunit B family. Component of the eukaryotic translation initiation factor 3 (eIF-3) complex.

The protein resides in the cytoplasm. Functionally, RNA-binding component of the eukaryotic translation initiation factor 3 (eIF-3) complex, which is involved in protein synthesis of a specialized repertoire of mRNAs and, together with other initiation factors, stimulates binding of mRNA and methionyl-tRNAi to the 40S ribosome. The eIF-3 complex specifically targets and initiates translation of a subset of mRNAs involved in cell proliferation. The protein is Eukaryotic translation initiation factor 3 subunit B of Kluyveromyces lactis (strain ATCC 8585 / CBS 2359 / DSM 70799 / NBRC 1267 / NRRL Y-1140 / WM37) (Yeast).